The following is a 334-amino-acid chain: Probable GTP 3',8-cyclase (334 aa).

Residues 24–256 form the Radical SAM core domain; that stretch reads PYGRKVTGLR…RKKYMIDGVE (233 aa). Arg33 provides a ligand contact to GTP. Residues Cys40 and Cys44 each contribute to the [4Fe-4S] cluster site. Residue Tyr46 coordinates S-adenosyl-L-methionine. Cys47 is a binding site for [4Fe-4S] cluster. Lys85 lines the GTP pocket. Residue Gly89 coordinates S-adenosyl-L-methionine. Thr113 is a binding site for GTP. Ser137 provides a ligand contact to S-adenosyl-L-methionine. Lys176 provides a ligand contact to GTP. The [4Fe-4S] cluster site is built by Cys269 and Cys272. 274–276 provides a ligand contact to GTP; the sequence is RLR. [4Fe-4S] cluster is bound at residue Cys286.

Belongs to the radical SAM superfamily. MoaA family. Requires [4Fe-4S] cluster as cofactor.

It carries out the reaction GTP + AH2 + S-adenosyl-L-methionine = (8S)-3',8-cyclo-7,8-dihydroguanosine 5'-triphosphate + 5'-deoxyadenosine + L-methionine + A + H(+). The protein operates within cofactor biosynthesis; molybdopterin biosynthesis. Catalyzes the cyclization of GTP to (8S)-3',8-cyclo-7,8-dihydroguanosine 5'-triphosphate. The chain is Probable GTP 3',8-cyclase from Methanosarcina mazei (strain ATCC BAA-159 / DSM 3647 / Goe1 / Go1 / JCM 11833 / OCM 88) (Methanosarcina frisia).